The following is a 48-amino-acid chain: Ambineela (48 aa).

As to quaternary structure, monomer. In terms of processing, the blue color is due to an unidentified non-fluorescent cofactor, covalently bound to it.

In terms of biological role, ambineela is a blue protein and has a pI of 8.7. This Acidianus ambivalens (Desulfurolobus ambivalens) protein is Ambineela.